Here is a 270-residue protein sequence, read N- to C-terminus: Fibroblast growth factor 5 (270 aa).

The N-terminal stretch at 1 to 20 is a signal peptide; it reads MSLSFLLLLFLSHLILSAWA. Residues 26–83 are disordered; that stretch reads LAPKGQPGPAATGRNPAGASSSRSSRGTTSSSSSSVSSSHSASLGNQGSGLEQSSFQW. Residues 43–68 show a composition bias toward low complexity; the sequence is GASSSRSSRGTTSSSSSSVSSSHSAS. The span at 69-83 shows a compositional bias: polar residues; the sequence is LGNQGSGLEQSSFQW. An N-linked (GlcNAc...) asparagine glycan is attached at asparagine 112. The tract at residues 236–257 is disordered; that stretch reads PEKKKPPSPVKPKVPLSAPRKS.

This sequence belongs to the heparin-binding growth factors family. Interacts with FGFR1 and FGFR2. Affinity between fibroblast growth factors (FGFs) and their receptors is increased by heparan sulfate glycosaminoglycans that function as coreceptors. As to expression, expressed in skin.

The protein resides in the secreted. In terms of biological role, plays an important role in the regulation of cell proliferation and cell differentiation. Required for normal regulation of the hair growth cycle. Functions as an inhibitor of hair elongation by promoting progression from anagen, the growth phase of the hair follicle, into catagen the apoptosis-induced regression phase. The chain is Fibroblast growth factor 5 (FGF5) from Felis catus (Cat).